A 97-amino-acid chain; its full sequence is YcgL domain-containing protein PSEEN4034 (97 aa).

The YcgL domain maps to 3-87 (RICSIYKSPR…PDDDYIEHLP (85 aa)).

In Pseudomonas entomophila (strain L48), this protein is YcgL domain-containing protein PSEEN4034.